Consider the following 798-residue polypeptide: Protocadherin beta-13 (798 aa).

The signal sequence occupies residues 1-28; sequence MEASGKLICRQRQVLFSFLLLGLSLAGA. Residues 29 to 690 lie on the Extracellular side of the membrane; sequence AEPRSYSVVE…AQADSLTVYL (662 aa). 5 consecutive Cadherin domains span residues 36 to 134, 139 to 243, 248 to 348, 353 to 451, and 456 to 561; these read VVEE…SPVF, MLVK…APEF, YRVQ…APEV, FTSP…APAF, and YTLF…SPFV. N-linked (GlcNAc...) asparagine glycosylation is found at N418 and N436. N567 carries N-linked (GlcNAc...) asparagine glycosylation. In terms of domain architecture, Cadherin 6 spans 568 to 671; the sequence is GSAPCTELVP…LVDGFSQPYL (104 aa). Residues 691–711 form a helical membrane-spanning segment; the sequence is VVALASVSSLFLFSVLLFVAV. The Cytoplasmic segment spans residues 712–798; that stretch reads RLCRRSRAAS…FPNNFGFNIQ (87 aa).

It is found in the cell membrane. Functionally, potential calcium-dependent cell-adhesion protein. May be involved in the establishment and maintenance of specific neuronal connections in the brain. This is Protocadherin beta-13 (PCDHB13) from Pan troglodytes (Chimpanzee).